The sequence spans 99 residues: Large ribosomal subunit protein bL21 (99 aa).

It belongs to the bacterial ribosomal protein bL21 family. Part of the 50S ribosomal subunit. Contacts protein L20.

Its function is as follows. This protein binds to 23S rRNA in the presence of protein L20. The chain is Large ribosomal subunit protein bL21 from Mesomycoplasma hyopneumoniae (strain 7448) (Mycoplasma hyopneumoniae).